Consider the following 380-residue polypeptide: tRNA-specific 2-thiouridylase MnmA (380 aa).

ATP contacts are provided by residues 10-17 (AMSGGVDS) and Leu36. Cys106 acts as the Nucleophile in catalysis. A disulfide bridge connects residues Cys106 and Cys202. Gly130 contacts ATP. Residues 152 to 154 (KNQ) form an interaction with tRNA region. The active-site Cysteine persulfide intermediate is Cys202. Residues 308–309 (RY) are interaction with tRNA.

The protein belongs to the MnmA/TRMU family.

The protein localises to the cytoplasm. The enzyme catalyses S-sulfanyl-L-cysteinyl-[protein] + uridine(34) in tRNA + AH2 + ATP = 2-thiouridine(34) in tRNA + L-cysteinyl-[protein] + A + AMP + diphosphate + H(+). In terms of biological role, catalyzes the 2-thiolation of uridine at the wobble position (U34) of tRNA, leading to the formation of s(2)U34. This is tRNA-specific 2-thiouridylase MnmA from Leptospira biflexa serovar Patoc (strain Patoc 1 / Ames).